Consider the following 862-residue polypeptide: MSSRFFYGGGSDSDSSSSDEEELYSDREEEEKSEEEESSEEEDETSEEEESDEETGARKFLKDVASDSEEEEEEEKVTVVKSAKDKRLDELENTIKLIENAKKINDWAVISTEFDKLNRQVAKITQSGPTPKIYIKAVADLEDFVNETVAKQKSGDKKLNASQAKGFNAAKQRIKKNNKDYGNLIDKYRKDKEDFMESDDEEAIPVIAAPRITKLERIEAPAAAIDDDGFATVGRGGKTLQYTPESILKHLRVIVESRGKKNTDRMEQIRTMEKLLEVAQTPYQRIRVYLTLISTRFDLTSTSSANYMAVDQWKSAEQDFSSLLSVLENNRDHVVFEGAEEWEDDEKQPTIAPGETLYIPGSIVSFAERLDDELTRSLQHIDPHTAEYIERLSDEKLLYTDLVRAQAYVEGLNEVEKTDPRQDSVNRVVMRRLEHVYFKPSQVITILEDATWKSLPSELDSSITPRASSGNVENLVLSLCNYLFKYSDGIIRARAMLCQIYFLALHDQYYRSRDLMLMSHLTENISNFDVSTQILFNRTLVQIGLCAFRSGLIYEAQNTLSEVCGSGRQKELLAQGIIMQRYSTVSPEQERLERQRQLPFHMHINLELLECIYLTSSMFLEVPLMAQTSSSPEMKRRVISKTFRRMLDYNERQVFTGPPENTRDGVIMSAKFLAAGDWKKAAEMLNSIKIWDLMPQPDKIKEMLSQQIQEEGLRTYLFTYAPFYDSLSIATLSNMFELSEKKISAIISRMISHEELAAALDQVNNAIVFRKGVELSRLQSQIVTLADKSMNLLEANEKTLEQRTQGMANAFQRDQGAGARGGRGSGRGGQARGGPRFPGGQQGRRPGGQQFGGGALGGAIKA.

A disordered region spans residues 1-81 (MSSRFFYGGG…EEEEKVTVVK (81 aa)). The span at 17–54 (SSDEEELYSDREEEEKSEEEESSEEEDETSEEEESDEE) shows a compositional bias: acidic residues. Residues 55–65 (TGARKFLKDVA) show a composition bias toward basic and acidic residues. Positions 66–75 (SDSEEEEEEE) are enriched in acidic residues. Residues 600-774 (FHMHINLELL…NAIVFRKGVE (175 aa)) enclose the PCI domain. The disordered stretch occupies residues 813–862 (RDQGAGARGGRGSGRGGQARGGPRFPGGQQGRRPGGQQFGGGALGGAIKA). Over residues 818–862 (GARGGRGSGRGGQARGGPRFPGGQQGRRPGGQQFGGGALGGAIKA) the composition is skewed to gly residues.

The protein belongs to the eIF-3 subunit C family. Component of the eukaryotic translation initiation factor 3 (eIF-3) complex.

It localises to the cytoplasm. Functionally, component of the eukaryotic translation initiation factor 3 (eIF-3) complex, which is involved in protein synthesis of a specialized repertoire of mRNAs and, together with other initiation factors, stimulates binding of mRNA and methionyl-tRNAi to the 40S ribosome. The eIF-3 complex specifically targets and initiates translation of a subset of mRNAs involved in cell proliferation. The sequence is that of Eukaryotic translation initiation factor 3 subunit C (nip1) from Aspergillus fumigatus (strain CBS 144.89 / FGSC A1163 / CEA10) (Neosartorya fumigata).